The primary structure comprises 361 residues: Tegument protein UL51 homolog (361 aa).

The S-palmitoyl cysteine; by host moiety is linked to residue Cys-8. The disordered stretch occupies residues 251–299 (GDEEDEVTVMSPSPEPVQQQPPVEPVQQQPQGRGSHRRRYKESAPQETL). Over residues 266-281 (PVQQQPPVEPVQQQPQ) the composition is skewed to low complexity.

This sequence belongs to the herpesviridae UL51 family. As to quaternary structure, oligomerizes. Interacts with UL103; this interaction mediates UL103 incorporation to virions. In terms of processing, phosphorylated. Post-translationally, palmitoylation is necessary for Golgi localization.

The protein localises to the virion tegument. It is found in the host cytoplasm. It localises to the host Golgi apparatus. In terms of biological role, plays several roles during the time course of infection, including egress of virus particles from the perinuclear space and secondary envelopment of cytoplasmic capsids that bud into specific trans-Golgi network (TGN)-derived membranes. This chain is Tegument protein UL51 homolog (UL71), found in Homo sapiens (Human).